A 400-amino-acid chain; its full sequence is Plasminogen activator inhibitor 1 (400 aa).

The N-terminal stretch at 1 to 21 (MQMSTVCLALGLALVFGEASA) is a signal peptide. Residues asparagine 230, asparagine 286, and asparagine 350 are each glycosylated (N-linked (GlcNAc...) asparagine).

Belongs to the serpin family. Forms a heterodimer with TMPRSS7. Interacts with VTN. Binds LRP1B; binding is followed by internalization and degradation. Interacts with PPP1CB. In complex with PLAU/uPA, interacts with PLAUR/uPAR. Interacts with SORL1 and LRP1, either alone or in complex with PLAU; these interactions are abolished in the presence of LRPAP1/RAP. The ternary complex composed of PLAUR-PLAU-PAI1 also interacts with SORL1. Interacts with PLAT/tPA. Also interacts with SORL1, when complexed to PLAT/tPA.

The protein localises to the secreted. Functionally, serine protease inhibitor. Inhibits TMPRSS7. Is a primary inhibitor of tissue-type plasminogen activator (PLAT) and urokinase-type plasminogen activator (PLAU). As PLAT inhibitor, it is required for fibrinolysis down-regulation and is responsible for the controlled degradation of blood clots. As PLAU inhibitor, it is involved in the regulation of cell adhesion and spreading. Acts as a regulator of cell migration, independently of its role as protease inhibitor. It is required for stimulation of keratinocyte migration during cutaneous injury repair. It is involved in cellular and replicative senescence. Plays a role in alveolar type 2 cells senescence in the lung. Is involved in the regulation of cementogenic differentiation of periodontal ligament stem cells, and regulates odontoblast differentiation and dentin formation during odontogenesis. The sequence is that of Plasminogen activator inhibitor 1 (SERPINE1) from Neovison vison (American mink).